Consider the following 353-residue polypeptide: MNILGIETSCDETSAAVLLDGRIGSNVISSQRCHTSFGGVVPELASREHERTIVSIVNSAVTEANITKNELDCIAATAGPGLIGAVMVGLCFAEGMAFALGIPFVPVNHIEAHMFSAFIPESPEHKSPEGPFISLTVSGGHTLLSLVREDLSYDVIGKTLDDAAGEAFDKTGKMLGLAYPAGPVIDRLAASGNPHFHAFPKALTSSSQTSRSYRGNFDFSFSGLKTSVLTWLQKHPAEFIQTHLHDIAASIQYAIVSVLTEKAVAAARYFRTDAISVAGGVSANSALRTAMQEACRHHGIRLYIPGTVYSTDNAAMIASLAGLMLSKGAVRKNNYDVAPFASFAAGAIKASLK.

Fe cation is bound by residues H109 and H113. Substrate-binding positions include 136-140 (TVSGG), D169, G182, D186, and N284. Position 312 (D312) interacts with Fe cation.

This sequence belongs to the KAE1 / TsaD family. Requires Fe(2+) as cofactor.

The protein localises to the cytoplasm. It catalyses the reaction L-threonylcarbamoyladenylate + adenosine(37) in tRNA = N(6)-L-threonylcarbamoyladenosine(37) in tRNA + AMP + H(+). Required for the formation of a threonylcarbamoyl group on adenosine at position 37 (t(6)A37) in tRNAs that read codons beginning with adenine. Is involved in the transfer of the threonylcarbamoyl moiety of threonylcarbamoyl-AMP (TC-AMP) to the N6 group of A37, together with TsaE and TsaB. TsaD likely plays a direct catalytic role in this reaction. The polypeptide is tRNA N6-adenosine threonylcarbamoyltransferase (Chlorobium limicola (strain DSM 245 / NBRC 103803 / 6330)).